A 510-amino-acid chain; its full sequence is NAD(P)H-quinone oxidoreductase subunit 2, chloroplastic (510 aa).

Transmembrane regions (helical) follow at residues 24–44, 59–79, 99–119, 124–144, 149–169, 183–203, 229–249, 295–315, 323–343, 347–367, 395–415, 418–438, and 484–504; these read LLLFHGSFIFPECILIFGLIL, WFYFISSTSLVMSITALLFRW, IFQFLILLCSTLCIPLSVEYI, MAITEFLLFVLTATLGGMFLC, XITIFVAPECFSLCSYLLSGY, YLLMGGASSSILVHGFSWLYG, ISIALISITVGIGFKLSPAPF, WHLLLEILAILSMILGNLIAI, MLAYSSIGQIGYVIIGIIVGD, GYASMITYMLFYISMNLGTFA, ALSSALCLLSLGGLPPLAGFF, LHLFWCGWQAGLYFLVSIGLL, and MTVCVIAXTIPGISMNPILAI.

Belongs to the complex I subunit 2 family. As to quaternary structure, NDH is composed of at least 16 different subunits, 5 of which are encoded in the nucleus.

It is found in the plastid. The protein resides in the chloroplast thylakoid membrane. It carries out the reaction a plastoquinone + NADH + (n+1) H(+)(in) = a plastoquinol + NAD(+) + n H(+)(out). It catalyses the reaction a plastoquinone + NADPH + (n+1) H(+)(in) = a plastoquinol + NADP(+) + n H(+)(out). Functionally, NDH shuttles electrons from NAD(P)H:plastoquinone, via FMN and iron-sulfur (Fe-S) centers, to quinones in the photosynthetic chain and possibly in a chloroplast respiratory chain. The immediate electron acceptor for the enzyme in this species is believed to be plastoquinone. Couples the redox reaction to proton translocation, and thus conserves the redox energy in a proton gradient. In Narcissus elegans (Daffodil), this protein is NAD(P)H-quinone oxidoreductase subunit 2, chloroplastic.